We begin with the raw amino-acid sequence, 500 residues long: UDP-N-acetylmuramoylalanine--D-glutamate ligase (500 aa).

An ATP-binding site is contributed by 111-117 (GTNGKST). The RPE3 insert domain occupies 260-306 (DISFELQHNSESFRQDEFQGEPAEPECIKIREHRQDLQNSLVSSFMH).

It belongs to the MurCDEF family.

It is found in the cytoplasm. It catalyses the reaction UDP-N-acetyl-alpha-D-muramoyl-L-alanine + D-glutamate + ATP = UDP-N-acetyl-alpha-D-muramoyl-L-alanyl-D-glutamate + ADP + phosphate + H(+). The protein operates within cell wall biogenesis; peptidoglycan biosynthesis. Its function is as follows. Cell wall formation. Catalyzes the addition of glutamate to the nucleotide precursor UDP-N-acetylmuramoyl-L-alanine (UMA). In Rickettsia conorii (strain ATCC VR-613 / Malish 7), this protein is UDP-N-acetylmuramoylalanine--D-glutamate ligase (murD).